Reading from the N-terminus, the 40-residue chain is Photosystem II reaction center protein J (40 aa).

The chain crosses the membrane as a helical span at residues 8-28; it reads IPLWIIGTVTGIIVIGLIGIF.

It belongs to the PsbJ family. As to quaternary structure, PSII is composed of 1 copy each of membrane proteins PsbA, PsbB, PsbC, PsbD, PsbE, PsbF, PsbH, PsbI, PsbJ, PsbK, PsbL, PsbM, PsbT, PsbX, PsbY, PsbZ, Psb30/Ycf12, at least 3 peripheral proteins of the oxygen-evolving complex and a large number of cofactors. It forms dimeric complexes.

It localises to the plastid. It is found in the chloroplast thylakoid membrane. Its function is as follows. One of the components of the core complex of photosystem II (PSII). PSII is a light-driven water:plastoquinone oxidoreductase that uses light energy to abstract electrons from H(2)O, generating O(2) and a proton gradient subsequently used for ATP formation. It consists of a core antenna complex that captures photons, and an electron transfer chain that converts photonic excitation into a charge separation. The protein is Photosystem II reaction center protein J of Morus indica (Mulberry).